The following is a 1149-amino-acid chain: Translocase of chloroplast 126, chloroplastic (1149 aa).

Disordered stretches follow at residues 1 to 206 (MDAL…GKEL), 219 to 292 (NMPN…RELT), and 315 to 431 (LELK…VNPS). Positions 131 to 142 (LYYDDYGDDGEV) are enriched in acidic residues. Over residues 152 to 168 (TSSSSSSSSSECSSSAS) the composition is skewed to low complexity. Composition is skewed to acidic residues over residues 271–280 (YDQEGEDADS) and 335–357 (GESD…DEHE). Residues 406-429 (TAATDTQSSNAASSTQVAGTTDVN) show a composition bias toward polar residues. Residues 514–743 (DFACTILVLG…KLQDTAAPGR (230 aa)) enclose the AIG1-type G domain. The G1 stretch occupies residues 523–530 (GKTGVGKS). Position 526–531 (526–531 (GVGKSA)) interacts with GTP. Mg(2+) is bound at residue Ser-530. The interval 550–554 (STTNV) is G2. Residues 570 to 573 (DTPG) form a G3 region. Residues 642-645 (THAS) form a G4 region. GTP contacts are provided by residues His-643 and 691 to 692 (EN). A G5 region spans residues 691–693 (ENH). 2 disordered regions span residues 769 to 800 (KLPD…LPPF) and 833 to 869 (KQHR…DEAG). Residues 773–796 (EQLDESDESDDDEEDEEEGDEYDD) are compositionally biased toward acidic residues. Composition is skewed to basic and acidic residues over residues 833 to 842 (KQHREQLQRR) and 852 to 862 (MRKEGLSHPAD). The helical transmembrane segment at 1123–1144 (MVLIGIVPILRSLINCRFGFGG) threads the bilayer.

Belongs to the TRAFAC class TrmE-Era-EngA-EngB-Septin-like GTPase superfamily. AIG1/Toc34/Toc159-like paraseptin GTPase family. TOC159 subfamily. Part of the TOC core complex. Mg(2+) serves as cofactor.

It localises to the plastid. The protein localises to the chloroplast outer membrane. In terms of biological role, GTPase involved in protein precursor import into chloroplasts. Seems to recognize chloroplast-destined precursor proteins and regulate their presentation to the translocation channel through GTP hydrolysis. Probably specialized in the import of nuclear encoded non-photosynthetic preproteins from the cytoplasm to the chloroplast. This Physcomitrium patens (Spreading-leaved earth moss) protein is Translocase of chloroplast 126, chloroplastic.